We begin with the raw amino-acid sequence, 280 residues long: Bifunctional protein FolD (280 aa).

NADP(+) is bound by residues 164 to 166 (GRS), Ser189, and Val230.

This sequence belongs to the tetrahydrofolate dehydrogenase/cyclohydrolase family. As to quaternary structure, homodimer.

It catalyses the reaction (6R)-5,10-methylene-5,6,7,8-tetrahydrofolate + NADP(+) = (6R)-5,10-methenyltetrahydrofolate + NADPH. The catalysed reaction is (6R)-5,10-methenyltetrahydrofolate + H2O = (6R)-10-formyltetrahydrofolate + H(+). It functions in the pathway one-carbon metabolism; tetrahydrofolate interconversion. In terms of biological role, catalyzes the oxidation of 5,10-methylenetetrahydrofolate to 5,10-methenyltetrahydrofolate and then the hydrolysis of 5,10-methenyltetrahydrofolate to 10-formyltetrahydrofolate. The polypeptide is Bifunctional protein FolD (Geotalea daltonii (strain DSM 22248 / JCM 15807 / FRC-32) (Geobacter daltonii)).